We begin with the raw amino-acid sequence, 434 residues long: Enolase (434 aa).

Residue Q163 participates in (2R)-2-phosphoglycerate binding. The Proton donor role is filled by E205. D242, E291, and D318 together coordinate Mg(2+). (2R)-2-phosphoglycerate-binding residues include K343, R372, S373, and K394. K343 serves as the catalytic Proton acceptor.

This sequence belongs to the enolase family. The cofactor is Mg(2+).

It is found in the cytoplasm. It localises to the secreted. Its subcellular location is the cell surface. The protein localises to the cell wall. The catalysed reaction is (2R)-2-phosphoglycerate = phosphoenolpyruvate + H2O. The protein operates within carbohydrate degradation; glycolysis; pyruvate from D-glyceraldehyde 3-phosphate: step 4/5. Functionally, catalyzes the reversible conversion of 2-phosphoglycerate (2-PG) into phosphoenolpyruvate (PEP). It is essential for the degradation of carbohydrates via glycolysis. The polypeptide is Enolase (Streptococcus pneumoniae serotype 2 (strain D39 / NCTC 7466)).